Consider the following 185-residue polypeptide: Elongation factor P (185 aa).

The protein belongs to the elongation factor P family.

It is found in the cytoplasm. Its pathway is protein biosynthesis; polypeptide chain elongation. In terms of biological role, involved in peptide bond synthesis. Stimulates efficient translation and peptide-bond synthesis on native or reconstituted 70S ribosomes in vitro. Probably functions indirectly by altering the affinity of the ribosome for aminoacyl-tRNA, thus increasing their reactivity as acceptors for peptidyl transferase. The protein is Elongation factor P of Burkholderia multivorans (strain ATCC 17616 / 249).